The sequence spans 1357 residues: DNA-directed RNA polymerase subunit beta (1357 aa).

The protein belongs to the RNA polymerase beta chain family. As to quaternary structure, the RNAP catalytic core consists of 2 alpha, 1 beta, 1 beta' and 1 omega subunit. When a sigma factor is associated with the core the holoenzyme is formed, which can initiate transcription.

It carries out the reaction RNA(n) + a ribonucleoside 5'-triphosphate = RNA(n+1) + diphosphate. In terms of biological role, DNA-dependent RNA polymerase catalyzes the transcription of DNA into RNA using the four ribonucleoside triphosphates as substrates. The chain is DNA-directed RNA polymerase subunit beta from Hahella chejuensis (strain KCTC 2396).